The chain runs to 378 residues: MRVLGLISGTSADGIDVAIAEIQGFQADLSVALLAFETIAYEPSLRDRILEVAAGFPLSVAELTALDAAIAQAFATAAQTLIQQHGAVDLIGSHGQTVYHQPLQAGQLGWSVQLGWGAAIAQQTGITTVSNFRSADLALGGQGAPPVPAVDLWLLGSDSENRCVQNIGGIGNLTWLPRRDHPDWQSEVRGWDTGPGNSLLDLAVQKLSQGRLSYDDGSQWAATGQIDQVLCDRWLQEDDYFRLPPPKSTGRERYGWQFLETWAAELDRLTAADQLATLTEFTAASIVNNYRHFLPALPDRVLVCGGGLHNQFLLQRLQQQLPTVKIASTDDFGVNSQAKEAIAIAVLAYWRQHNVPGNLPAVTGASGPALLGDVFART.

ATP is bound at residue 9-16 (GTSADGID).

It belongs to the anhydro-N-acetylmuramic acid kinase family.

It carries out the reaction 1,6-anhydro-N-acetyl-beta-muramate + ATP + H2O = N-acetyl-D-muramate 6-phosphate + ADP + H(+). Its pathway is amino-sugar metabolism; 1,6-anhydro-N-acetylmuramate degradation. It functions in the pathway cell wall biogenesis; peptidoglycan recycling. Its function is as follows. Catalyzes the specific phosphorylation of 1,6-anhydro-N-acetylmuramic acid (anhMurNAc) with the simultaneous cleavage of the 1,6-anhydro ring, generating MurNAc-6-P. Is required for the utilization of anhMurNAc either imported from the medium or derived from its own cell wall murein, and thus plays a role in cell wall recycling. The protein is Anhydro-N-acetylmuramic acid kinase of Synechococcus sp. (strain ATCC 27144 / PCC 6301 / SAUG 1402/1) (Anacystis nidulans).